Consider the following 426-residue polypeptide: D-tagatose-1,6-bisphosphate aldolase subunit KbaZ (426 aa).

Belongs to the GatZ/KbaZ family. KbaZ subfamily. Forms a complex with KbaY.

It functions in the pathway carbohydrate metabolism; D-tagatose 6-phosphate degradation; D-glyceraldehyde 3-phosphate and glycerone phosphate from D-tagatose 6-phosphate: step 2/2. Component of the tagatose-1,6-bisphosphate aldolase KbaYZ that is required for full activity and stability of the Y subunit. Could have a chaperone-like function for the proper and stable folding of KbaY. When expressed alone, KbaZ does not show any aldolase activity. This is D-tagatose-1,6-bisphosphate aldolase subunit KbaZ from Shigella flexneri.